The chain runs to 602 residues: Aspartate--tRNA(Asp/Asn) ligase (602 aa).

L-aspartate is bound at residue E177. An aspartate region spans residues 201–204 (QLFK). R223 is an L-aspartate binding site. ATP contacts are provided by residues 223 to 225 (RDE) and Q232. H460 serves as a coordination point for L-aspartate. E497 is a binding site for ATP. L-aspartate is bound at residue R504. 549 to 552 (GLDR) is an ATP binding site.

This sequence belongs to the class-II aminoacyl-tRNA synthetase family. Type 1 subfamily. Homodimer.

Its subcellular location is the cytoplasm. It carries out the reaction tRNA(Asx) + L-aspartate + ATP = L-aspartyl-tRNA(Asx) + AMP + diphosphate. Aspartyl-tRNA synthetase with relaxed tRNA specificity since it is able to aspartylate not only its cognate tRNA(Asp) but also tRNA(Asn). Reaction proceeds in two steps: L-aspartate is first activated by ATP to form Asp-AMP and then transferred to the acceptor end of tRNA(Asp/Asn). In Prochlorococcus marinus (strain MIT 9515), this protein is Aspartate--tRNA(Asp/Asn) ligase.